Consider the following 1494-residue polypeptide: Ral GTPase-activating protein subunit beta (1494 aa).

Disordered stretches follow at residues 355-437 (PRSD…APRR) and 709-738 (ENNLKSHSRTNSGISSASGGSTEPTTPDSE). Serine 359 carries the post-translational modification Phosphoserine. Threonine 363 and threonine 379 each carry phosphothreonine. Composition is skewed to polar residues over residues 369–381 (SMPQSAAVSTTPP), 392–428 (NKATMKTSTVSTAHASKVQHQTSSTSPLSSPNQTSSE), and 711–735 (NLKSHSRTNSGISSASGGSTEPTTP). Serine 421 and serine 720 each carry phosphoserine. Threonine 734 carries the phosphothreonine modification. A Rap-GAP domain is found at 1149–1392 (IGYLDLLPCR…TTLEKEVPVI (244 aa)). Serine 1285 bears the Phosphoserine mark. Residues 1312 to 1323 (NLNSSQRLSPSS) show a composition bias toward polar residues. The disordered stretch occupies residues 1312-1335 (NLNSSQRLSPSSRMRKLPQGRPVP).

Component of the heterodimeric RalGAP1 complex with RALGAPA1 and of the heterodimeric RalGAP2 complex with RALGAPA2. Heterodimerization is required for activity. Highly expressed in brain, mostly in amygdala.

In terms of biological role, non-catalytic subunit of the heterodimeric RalGAP1 and RalGAP2 complexes which act as GTPase activators for the Ras-like small GTPases RALA and RALB. The polypeptide is Ral GTPase-activating protein subunit beta (RALGAPB) (Homo sapiens (Human)).